We begin with the raw amino-acid sequence, 518 residues long: 2,3-bisphosphoglycerate-independent phosphoglycerate mutase (518 aa).

Residues aspartate 14 and serine 64 each contribute to the Mn(2+) site. Serine 64 (phosphoserine intermediate) is an active-site residue. Substrate-binding positions include histidine 125, 155–156 (RD), arginine 187, arginine 193, 264–267 (RPDR), and lysine 337. 5 residues coordinate Mn(2+): aspartate 404, histidine 408, aspartate 445, histidine 446, and histidine 467.

Belongs to the BPG-independent phosphoglycerate mutase family. Mn(2+) is required as a cofactor.

It carries out the reaction (2R)-2-phosphoglycerate = (2R)-3-phosphoglycerate. It participates in carbohydrate degradation; glycolysis; pyruvate from D-glyceraldehyde 3-phosphate: step 3/5. Its function is as follows. Catalyzes the interconversion of 2-phosphoglycerate and 3-phosphoglycerate. The sequence is that of 2,3-bisphosphoglycerate-independent phosphoglycerate mutase from Methanococcoides burtonii (strain DSM 6242 / NBRC 107633 / OCM 468 / ACE-M).